A 391-amino-acid chain; its full sequence is Multidrug resistance protein MdtL (391 aa).

At 1-3 (MSR) the chain is on the cytoplasmic side. Residues 4–24 (FLICSFALVLLYPAGIDMYLV) traverse the membrane as a helical segment. Residues 25-41 (GLPRIAADLNASEAQLH) lie on the Periplasmic side of the membrane. A helical transmembrane segment spans residues 42–62 (IAFSVYLAGMAAAMLFAGKVA). At 63 to 68 (DRSGRK) the chain is on the cytoplasmic side. Residues 69–89 (PVAIPGAALFIIASVFCSLAE) form a helical membrane-spanning segment. The Periplasmic segment spans residues 90 to 92 (TST). Residues 93–113 (LFLAGRFLQGLGAGCCYVVAF) form a helical membrane-spanning segment. The Cytoplasmic portion of the chain corresponds to 114–130 (AILRDTLDDRRRAKVLS). A helical membrane pass occupies residues 131–151 (LLNGITCIIPVLAPVLGHLIM). The Periplasmic segment spans residues 152-157 (LKFPWQ). A helical transmembrane segment spans residues 158-178 (SLFWTMAIMGIAVLMLSLFIL). Residues 179–198 (KETRPAAPAASDKSRENSES) lie on the Cytoplasmic side of the membrane. A helical transmembrane segment spans residues 199–221 (LLNRFFLSRVVITTLSVSVILTF). The Periplasmic segment spans residues 222–244 (VNTSPVLLMEIMGFERGEYATIM). Residues 245 to 265 (ALTAGVSMTVSFSTPFALGIF) form a helical membrane-spanning segment. The Cytoplasmic segment spans residues 266-268 (KPR). A helical membrane pass occupies residues 269–289 (TLMITSQVLFLAAGITLAVSP). Over 290–292 (SHA) the chain is Periplasmic. A helical transmembrane segment spans residues 293–313 (ISLFGITLICAGFSVGFGVAM). Topologically, residues 314 to 330 (SQALGPFSLRAGVASST) are cytoplasmic. A helical transmembrane segment spans residues 331 to 351 (LGIAQVCGSSLWIWLAAVVGI). Over 352–355 (GAWN) the chain is Periplasmic. A helical transmembrane segment spans residues 356–376 (MLIGILIACSIVSLLLIMFVA). The Cytoplasmic segment spans residues 377–391 (PGRPVAAHEEIHHHA).

The protein belongs to the major facilitator superfamily. DHA1 family. MdtL (TC 2.A.1.2.22) subfamily.

The protein localises to the cell inner membrane. In Shigella dysenteriae serotype 1 (strain Sd197), this protein is Multidrug resistance protein MdtL.